Here is a 210-residue protein sequence, read N- to C-terminus: MNIAVSPSAEEPSARTQVQWSLRWESELQLADHAELADFFRKSYGPTGAFNAQPFEGIRSWAGARPEMRVIGYDAHGVAAHIGLLRRFIKIGGVDLLVAELGLYAVRPDLEGLGISHSMRVMYPALQELGVPFGFGTVRPALEKHLTRLVGRRGLATLMPGIRVRSTQADVYPNLSPIRIEDVLVVVFPVGRSMGEWPAGTIIDRNGPEL.

It belongs to the NodA family.

Its subcellular location is the cytoplasm. In terms of biological role, N-acyltransferase required for nodulation. Acts in the production of a small, heat-stable compound (Nod) that stimulates mitosis in various plant protoplasts. The polypeptide is Nodulation protein A (nodA) (Bradyrhizobium elkanii).